Consider the following 483-residue polypeptide: ATP synthase subunit beta (483 aa).

169–176 (GGAGVGKT) contributes to the ATP binding site.

Belongs to the ATPase alpha/beta chains family. As to quaternary structure, F-type ATPases have 2 components, CF(1) - the catalytic core - and CF(0) - the membrane proton channel. CF(1) has five subunits: alpha(3), beta(3), gamma(1), delta(1), epsilon(1). CF(0) has three main subunits: a(1), b(2) and c(9-12). The alpha and beta chains form an alternating ring which encloses part of the gamma chain. CF(1) is attached to CF(0) by a central stalk formed by the gamma and epsilon chains, while a peripheral stalk is formed by the delta and b chains.

The protein resides in the cell membrane. It catalyses the reaction ATP + H2O + 4 H(+)(in) = ADP + phosphate + 5 H(+)(out). Produces ATP from ADP in the presence of a proton gradient across the membrane. The catalytic sites are hosted primarily by the beta subunits. The polypeptide is ATP synthase subunit beta (Corynebacterium glutamicum (strain ATCC 13032 / DSM 20300 / JCM 1318 / BCRC 11384 / CCUG 27702 / LMG 3730 / NBRC 12168 / NCIMB 10025 / NRRL B-2784 / 534)).